Consider the following 444-residue polypeptide: Docking protein 3 (444 aa).

The region spanning 7-123 (PVKDGLLYQQ…WMDPICQLAF (117 aa)) is the PH domain. Residues 47-66 (DVRDGGLGPGGDRPAGPGRR) are disordered. Position 138 is a phosphoserine (Ser138). An IRS-type PTB domain is found at 157–261 (EVAEFPVVVQ…ARQRERLPEL (105 aa)). Ser274, Ser308, and Ser314 each carry phosphoserine. At Tyr325 the chain carries Phosphotyrosine. The tract at residues 354-390 (GLSNGGPEAQEGPPGGRSPLGSPIYHNSEELSWPGSA) is disordered. Residues 358–376 (GGPEAQEGPPGGRSPLGSP) are compositionally biased toward low complexity. Position 371 is a phosphoserine (Ser371).

The protein belongs to the DOK family. Type A subfamily. In terms of assembly, on tyrosine phosphorylation, interacts with CSK and INPP5D/SHIP1 via their SH2 domains. Binds ABL1 through the PTB domain and in a kinase-dependent manner. Does not interact with RasGAP. In terms of processing, constitutively tyrosine-phosphorylated. On IL2 stimulation, phosphorylated on C-terminal tyrosine residues possibly by Src kinases. Can also be phosphorylated by ABL1 kinase.

The protein localises to the cytoplasm. Its subcellular location is the cell membrane. Functionally, DOK proteins are enzymatically inert adaptor or scaffolding proteins. They provide a docking platform for the assembly of multimolecular signaling complexes. DOK3 is a negative regulator of JNK signaling in B-cells through interaction with INPP5D/SHIP1. May modulate ABL1 function. This chain is Docking protein 3 (Dok3), found in Rattus norvegicus (Rat).